We begin with the raw amino-acid sequence, 273 residues long: Putative phosphoenolpyruvate synthase regulatory protein (273 aa).

153–160 (AVSRAGKT) is a binding site for ADP.

This sequence belongs to the pyruvate, phosphate/water dikinase regulatory protein family. PSRP subfamily.

It carries out the reaction [pyruvate, water dikinase] + ADP = [pyruvate, water dikinase]-phosphate + AMP + H(+). The enzyme catalyses [pyruvate, water dikinase]-phosphate + phosphate + H(+) = [pyruvate, water dikinase] + diphosphate. In terms of biological role, bifunctional serine/threonine kinase and phosphorylase involved in the regulation of the phosphoenolpyruvate synthase (PEPS) by catalyzing its phosphorylation/dephosphorylation. In Xanthomonas campestris pv. campestris (strain ATCC 33913 / DSM 3586 / NCPPB 528 / LMG 568 / P 25), this protein is Putative phosphoenolpyruvate synthase regulatory protein.